Here is a 208-residue protein sequence, read N- to C-terminus: Orotidine 5'-phosphate decarboxylase (208 aa).

Residues D7, K29, 57–66 (DLKLADIPNT), S109, 162–172 (PGIGAQGGKAK), G185, and R186 contribute to the substrate site. K59 serves as the catalytic Proton donor.

It belongs to the OMP decarboxylase family. Type 1 subfamily. As to quaternary structure, homodimer.

It catalyses the reaction orotidine 5'-phosphate + H(+) = UMP + CO2. It functions in the pathway pyrimidine metabolism; UMP biosynthesis via de novo pathway; UMP from orotate: step 2/2. In terms of biological role, catalyzes the decarboxylation of orotidine 5'-monophosphate (OMP) to uridine 5'-monophosphate (UMP). This is Orotidine 5'-phosphate decarboxylase (pyrF) from Pyrococcus horikoshii (strain ATCC 700860 / DSM 12428 / JCM 9974 / NBRC 100139 / OT-3).